The sequence spans 348 residues: Rhodopsin (348 aa).

An N-acetylmethionine modification is found at Met-1. Residues 1-36 (MNGTEGPNFYVPFSNITGVVRSPFEQPQYYLAEPWQ) lie on the Extracellular side of the membrane. N-linked (GlcNAc...) asparagine glycans are attached at residues Asn-2 and Asn-15. A helical transmembrane segment spans residues 37–61 (FSMLAAYMFLLIVLGFPINFLTLYV). At 62 to 73 (TVQHKKLRTPLN) the chain is on the cytoplasmic side. A helical membrane pass occupies residues 74 to 96 (YILLNLAVADLFMVFGGFTTTLY). Topologically, residues 97–110 (TSLHGYFVFGPTGC) are extracellular. The cysteines at positions 110 and 187 are disulfide-linked. A helical membrane pass occupies residues 111–133 (NLEGFFATLGGEIGLWSLVVLAI). The 'Ionic lock' involved in activated form stabilization signature appears at 134–136 (ERY). The Cytoplasmic portion of the chain corresponds to 134–152 (ERYVVVCKPMSNFRFGENH). Residues 153–173 (AIMGVAFTWVMALACAAPPLV) form a helical membrane-spanning segment. The Extracellular portion of the chain corresponds to 174 to 202 (GWSRYIPEGMQCSCGIDYYTLKPEVNNES). Residue Glu-201 participates in Zn(2+) binding. The helical transmembrane segment at 203 to 224 (FVIYMFVVHFTIPMIVIFFCYG) threads the bilayer. The Cytoplasmic portion of the chain corresponds to 225-252 (QLVFTVKEAAAQQQESATTQKAEKEVTR). The chain crosses the membrane as a helical span at residues 253–274 (MVIIMVIFFLICWLPYASVAMY). Residues 275–286 (IFTHQGSNFGPI) are Extracellular-facing. Gln-279 contributes to the Zn(2+) binding site. Residues 287 to 308 (FMTLPAFFAKTASIYNPIIYIM) traverse the membrane as a helical segment. Residue Lys-296 is modified to N6-(retinylidene)lysine. At 309 to 348 (MNKQFRNCMLTSLCCGKNPLGDDEASATASKTETSQVAPA) the chain is on the cytoplasmic side. Residues Cys-322 and Cys-323 are each lipidated (S-palmitoyl cysteine). Residues 330–348 (DDEASATASKTETSQVAPA) form an interaction with SAG region. Ser-334 is subject to Phosphoserine. Position 336 is a phosphothreonine (Thr-336). Ser-338 is modified (phosphoserine). Residues Thr-340 and Thr-342 each carry the phosphothreonine modification. Residue Ser-343 is modified to Phosphoserine.

Belongs to the G-protein coupled receptor 1 family. Opsin subfamily. As to quaternary structure, homodimer. May form a complex composed of RHO, GRK1 and RCVRN in a Ca(2+)-dependent manner; RCVRN prevents the interaction between GRK1 and RHO. Interacts with GRK1. Interacts (phosphorylated form) with SAG. Interacts with GNAT1. Interacts with GNAT3. SAG and G-proteins compete for a common binding site. Interacts with PRCD; the interaction promotes PRCD stability. Forms a complex with ASAP1 and ARF4. Forms a complex with ASAP1, RAB11A, Rabin8/RAB3IP, ARF4 and RAB11FIP3; the complex regulates Golgi-to-cilia rhodopsin/RHO transport in photoreceptors. Post-translationally, phosphorylated on some or all of the serine and threonine residues present in the C-terminal region. Contains one covalently linked retinal chromophore. Upon light absorption, the covalently bound 11-cis-retinal is converted to all-trans-retinal. After hydrolysis of the Schiff base and release of the covalently bound all-trans-retinal, active rhodopsin is regenerated by binding of a fresh molecule of 11-cis-retinal.

The protein resides in the membrane. Its subcellular location is the cell projection. It localises to the cilium. The protein localises to the photoreceptor outer segment. Photoreceptor required for image-forming vision at low light intensity. Required for photoreceptor cell viability after birth. Light-induced isomerization of 11-cis to all-trans retinal triggers a conformational change that activates signaling via G-proteins. Subsequent receptor phosphorylation mediates displacement of the bound G-protein alpha subunit by the arrestin SAG and terminates signaling. This chain is Rhodopsin (Rho), found in Rattus norvegicus (Rat).